Here is an 892-residue protein sequence, read N- to C-terminus: DNA mismatch repair protein MutS (892 aa).

Residues 663 to 684 form a disordered region; that stretch reads TNTSLREAAPTTTLSTSDQGQM. 696–703 contributes to the ATP binding site; that stretch reads GPNASGKS.

It belongs to the DNA mismatch repair MutS family.

Its function is as follows. This protein is involved in the repair of mismatches in DNA. It is possible that it carries out the mismatch recognition step. This protein has a weak ATPase activity. The chain is DNA mismatch repair protein MutS from Nostoc punctiforme (strain ATCC 29133 / PCC 73102).